Reading from the N-terminus, the 476-residue chain is VGYITQIIGPVLDVAPSPGKMPNIYNSLIVKGRNPAGQDINVTCEVQQLLGNNEVRAVXMSATDGLMRGMGAVDTGAPLSVPVGEITPGRISNVLGEPVDNLGPVESSTTFPIHRSAPAFTQLDTKLSIFETGIKVVDLLAPYRRGGKIGLFGGAGVGKTVLIMELINNIAKAHGGVSVSGGVGERTREGNDLYMETKESKVINEQNLSESKVALVYGQMNEPPGARMRVGSTAPTMAEYFRDVNKQDVLLFIDNIFRFVQAGSEVSALSGRMPSAVGYQPTLGTEMGCLQERITSTKEGSITSIQAVYVPADDLTDPAPATTFAHLDATTVLSRGLAAKGIYPAVDPLDSTSTMLQPWIVGEEHYETAQGVKQTLQRYKEPQDIIAIPGLDELSEEDRLTVARARKIERFLSQPFLVAEVFTGSPGKYVSLLETIKGFQMILPGELDNLPEQAFYLVGNIDEATAKAATLQVEGQ.

An ATP-binding site is contributed by 153–160 (GGAGVGKT).

The protein belongs to the ATPase alpha/beta chains family. In terms of assembly, F-type ATPases have 2 components, CF(1) - the catalytic core - and CF(0) - the membrane proton channel. CF(1) has five subunits: alpha(3), beta(3), gamma(1), delta(1), epsilon(1). CF(0) has four main subunits: a(1), b(1), b'(1) and c(9-12).

The protein localises to the plastid. Its subcellular location is the chloroplast thylakoid membrane. The enzyme catalyses ATP + H2O + 4 H(+)(in) = ADP + phosphate + 5 H(+)(out). Its function is as follows. Produces ATP from ADP in the presence of a proton gradient across the membrane. The catalytic sites are hosted primarily by the beta subunits. This chain is ATP synthase subunit beta, chloroplastic, found in Dicksonia antarctica (Australian tree fern).